Consider the following 557-residue polypeptide: Acetylcholine receptor subunit alpha-L1 (557 aa).

An N-terminal signal peptide occupies residues 1-23; sequence MAAALPPMLLLLLLLLLHHPAAA. The Extracellular portion of the chain corresponds to 24–244; the sequence is NPDAKRLYDD…NITLRRKTLF (221 aa). N47 carries an N-linked (GlcNAc...) asparagine glycan. 2 disulfides stabilise this stretch: C151-C165 and C224-C225. Residue N235 is glycosylated (N-linked (GlcNAc...) asparagine). The next 3 membrane-spanning stretches (helical) occupy residues 245 to 266, 274 to 294, and 308 to 329; these read YTVN…VFYL, IALC…ISEI, and YLLF…VLNV. Residues 330-500 are Cytoplasmic-facing; that stretch reads HYRKPSTHKM…EFDAEDQDWG (171 aa). The helical transmembrane segment at 501–523 threads the bilayer; sequence FVAMVLDRLFLWIFTIASIVGTF.

It belongs to the ligand-gated ion channel (TC 1.A.9) family. Acetylcholine receptor (TC 1.A.9.1) subfamily.

The protein resides in the postsynaptic cell membrane. It is found in the cell membrane. After binding acetylcholine, the AChR responds by an extensive change in conformation that affects all subunits and leads to opening of an ion-conducting channel across the plasma membrane. This Schistocerca gregaria (Desert locust) protein is Acetylcholine receptor subunit alpha-L1.